A 197-amino-acid polypeptide reads, in one-letter code: Holliday junction branch migration complex subunit RuvA (197 aa).

Residues 1-63 are domain I; sequence MYAYLKGIIT…EDAHLLYGFR (63 aa). A domain II region spans residues 64–142; it reads SEDEKKLFLS…VAGDDLPAKI (79 aa). Positions 143 to 147 are flexible linker; sequence AVQAS. The segment at 148-197 is domain III; it reads AENQELEEAMEAMLALGYKATELKKIKKFFEGTTDTAENYIKSALKMLVK.

It belongs to the RuvA family. Homotetramer. Forms an RuvA(8)-RuvB(12)-Holliday junction (HJ) complex. HJ DNA is sandwiched between 2 RuvA tetramers; dsDNA enters through RuvA and exits via RuvB. An RuvB hexamer assembles on each DNA strand where it exits the tetramer. Each RuvB hexamer is contacted by two RuvA subunits (via domain III) on 2 adjacent RuvB subunits; this complex drives branch migration. In the full resolvosome a probable DNA-RuvA(4)-RuvB(12)-RuvC(2) complex forms which resolves the HJ.

It localises to the cytoplasm. In terms of biological role, the RuvA-RuvB-RuvC complex processes Holliday junction (HJ) DNA during genetic recombination and DNA repair, while the RuvA-RuvB complex plays an important role in the rescue of blocked DNA replication forks via replication fork reversal (RFR). RuvA specifically binds to HJ cruciform DNA, conferring on it an open structure. The RuvB hexamer acts as an ATP-dependent pump, pulling dsDNA into and through the RuvAB complex. HJ branch migration allows RuvC to scan DNA until it finds its consensus sequence, where it cleaves and resolves the cruciform DNA. This is Holliday junction branch migration complex subunit RuvA from Streptococcus pneumoniae (strain Taiwan19F-14).